Consider the following 354-residue polypeptide: Decorin (354 aa).

A signal peptide spans 1 to 16; it reads MKATLVLFLLAQVSWA. Positions 17 to 30 are excised as a propeptide; that stretch reads GPFEQRGLFDFMLE. O-linked (Xyl...) (glycosaminoglycan) serine glycosylation occurs at S34. Cystine bridges form between C49-C55 and C53-C62. 12 LRR repeats span residues 68–88, 89–112, 113–136, 137–157, 158–181, 182–207, 208–228, 229–252, 253–276, 277–299, 300–329, and 330–354; these read DKVP…NNKI, TEIK…NNKI, SKIS…KNHL, KELP…DNEI, TKLK…GNPL, KNSG…DTNI, TAIP…GNKI, AKVD…FNSI, TVVE…NNKL, LRVP…NNNI, SEVG…SNPV, and RYWQ…GNYK. The N-linked (GlcNAc...) asparagine glycan is linked to N206. N-linked (GlcNAc...) asparagine glycosylation is found at N241, N257, and N298. C308 and C341 are disulfide-bonded.

This sequence belongs to the small leucine-rich proteoglycan (SLRP) family. SLRP class I subfamily. As to quaternary structure, binds to type I and type II collagen, fibronectin and TGF-beta. Forms a ternary complex with MFAP2 and ELN. Interacts with DPT. In terms of processing, the attached glycosaminoglycan chain can be either chondroitin sulfate or dermatan sulfate depending upon the tissue of origin.

It localises to the secreted. Its subcellular location is the extracellular space. The protein localises to the extracellular matrix. Functionally, may affect the rate of fibrils formation. May be implicated in the dilatation of the rat cervix. The chain is Decorin (Dcn) from Rattus norvegicus (Rat).